The primary structure comprises 80 residues: Translation initiation factor IF-1, chloroplastic (80 aa).

The S1-like domain maps to 1–74 (MKEQKWIHEG…TRGRIIYRLR (74 aa)).

Belongs to the IF-1 family. In terms of assembly, component of the 30S ribosomal translation pre-initiation complex which assembles on the 30S ribosome in the order IF-2 and IF-3, IF-1 and N-formylmethionyl-tRNA(fMet); mRNA recruitment can occur at any time during PIC assembly.

It is found in the plastid. It localises to the chloroplast. In terms of biological role, one of the essential components for the initiation of protein synthesis. Stabilizes the binding of IF-2 and IF-3 on the 30S subunit to which N-formylmethionyl-tRNA(fMet) subsequently binds. Helps modulate mRNA selection, yielding the 30S pre-initiation complex (PIC). Upon addition of the 50S ribosomal subunit IF-1, IF-2 and IF-3 are released leaving the mature 70S translation initiation complex. The chain is Translation initiation factor IF-1, chloroplastic from Illicium oligandrum (Star anise).